Reading from the N-terminus, the 1363-residue chain is Vascular endothelial growth factor receptor 3 (1363 aa).

The signal sequence occupies residues 1–24; that stretch reads MQRGAALCLRLWLCLGLLDGLVSG. Residues 25–775 are Extracellular-facing; sequence YSMTPPTLNI…EGSEDKGSME (751 aa). Ig-like C2-type domains follow at residues 30–127, 151–213, 219–326, 331–415, 422–552, 555–671, and 678–764; these read PTLN…TAAS, KDAM…WGDQ, PFLV…TEVI, PFIS…ISLE, PQIH…FYVT, PDGF…KYLS, and PRLT…ASVA. 6 N-linked (GlcNAc...) asparagine glycosylation sites follow: asparagine 33, asparagine 104, asparagine 166, asparagine 251, asparagine 299, and asparagine 411. 2 cysteine pairs are disulfide-bonded: cysteine 51–cysteine 111 and cysteine 158–cysteine 206. Cysteine 252 and cysteine 310 are disulfide-bonded. Cystine bridges form between cysteine 445–cysteine 534, cysteine 466–cysteine 486, and cysteine 578–cysteine 653. N-linked (GlcNAc...) asparagine glycosylation is found at asparagine 515, asparagine 527, asparagine 594, asparagine 683, and asparagine 690. The cysteines at positions 699 and 751 are disulfide-linked. The N-linked (GlcNAc...) asparagine glycan is linked to asparagine 758. The chain crosses the membrane as a helical span at residues 776-796; that stretch reads IVILVGTGVIAVFFWVLLLLI. The Cytoplasmic segment spans residues 797 to 1363; sequence FCNMRRPAHA…RVTFFTDNSY (567 aa). A phosphotyrosine; by SRC mark is found at tyrosine 830, tyrosine 833, and tyrosine 853. The Protein kinase domain maps to 845-1173; the sequence is LHLGRVLGYG…ELVEILGDLL (329 aa). ATP is bound by residues 851-859 and lysine 879; that span reads LGYGAFGKV. Catalysis depends on aspartate 1037, which acts as the Proton acceptor. Tyrosine 1063 carries the post-translational modification Phosphotyrosine; by autocatalysis and SRC. Tyrosine 1068, tyrosine 1230, tyrosine 1231, and tyrosine 1265 each carry phosphotyrosine; by autocatalysis. Residues 1291–1331 form a disordered region; sequence HRQESGFSCKGPGQNVAVTRAHPDSQGRRRRPERGARGGQV. Phosphotyrosine; by autocatalysis and SRC occurs at positions 1333 and 1337. Tyrosine 1363 is subject to Phosphotyrosine; by autocatalysis.

The protein belongs to the protein kinase superfamily. Tyr protein kinase family. CSF-1/PDGF receptor subfamily. As to quaternary structure, interacts with VEGFC and VEGFD. Monomer in the absence of bound VEGFC or VEGFD. Homodimer in the presence of bound VEGFC or VEGFD. Can also form a heterodimer with KDR. Interacts with PTPN14; the interaction is enhanced by stimulation with VEGFC. Interacts with CRK, GRB2, PTK2/FAK1, SHC1, PIK3R1 and PTPN11/SHP-2. Identified in a complex with SRC and ITGB1. Autophosphorylated on tyrosine residues upon ligand binding. Autophosphorylation occurs in trans, i.e. one subunit of the dimeric receptor phosphorylates tyrosine residues on the other subunit. Phosphorylation in response to H(2)O(2) is mediated by a process that requires SRC and PRKCD activity. Phosphorylation at Tyr-1068 is required for autophosphorylation at additional tyrosine residues. Phosphorylation at Tyr-1063 and Tyr-1337 is important for interaction with CRK and subsequent activation of MAPK8. Phosphorylation at Tyr-1230, Tyr-1231 and Tyr-1337 is important for interaction with GRB2 and subsequent activation of the AKT1 and MAPK1/ERK2 and/or MAPK3/ERK1 signaling pathways. In response to endothelial cell adhesion onto collagen, can also be phosphorylated in the absence of FLT4 kinase activity by SRC at Tyr-830, Tyr-833, Tyr-853, Tyr-1063, Tyr-1333, and Tyr-1337. In terms of tissue distribution, detected in endothelial cells (at protein level). Widely expressed. Detected in fetal spleen, lung and brain. Detected in adult liver, muscle, thymus, placenta, lung, testis, ovary, prostate, heart, and kidney.

The protein localises to the cell membrane. Its subcellular location is the cytoplasm. It is found in the nucleus. It localises to the secreted. The enzyme catalyses L-tyrosyl-[protein] + ATP = O-phospho-L-tyrosyl-[protein] + ADP + H(+). Present in an inactive conformation in the absence of bound ligand. Binding of VEGFC or VEGFD leads to dimerization and activation by autophosphorylation on tyrosine residues. Inhibited by MAZ51. Tyrosine-protein kinase that acts as a cell-surface receptor for VEGFC and VEGFD, and plays an essential role in adult lymphangiogenesis and in the development of the vascular network and the cardiovascular system during embryonic development. Promotes proliferation, survival and migration of endothelial cells, and regulates angiogenic sprouting. Signaling by activated FLT4 leads to enhanced production of VEGFC, and to a lesser degree VEGFA, thereby creating a positive feedback loop that enhances FLT4 signaling. Modulates KDR signaling by forming heterodimers. The secreted isoform 3 may function as a decoy receptor for VEGFC and/or VEGFD and play an important role as a negative regulator of VEGFC-mediated lymphangiogenesis and angiogenesis. Binding of vascular growth factors to isoform 1 or isoform 2 leads to the activation of several signaling cascades; isoform 2 seems to be less efficient in signal transduction, because it has a truncated C-terminus and therefore lacks several phosphorylation sites. Mediates activation of the MAPK1/ERK2, MAPK3/ERK1 signaling pathway, of MAPK8 and the JUN signaling pathway, and of the AKT1 signaling pathway. Phosphorylates SHC1. Mediates phosphorylation of PIK3R1, the regulatory subunit of phosphatidylinositol 3-kinase. Promotes phosphorylation of MAPK8 at 'Thr-183' and 'Tyr-185', and of AKT1 at 'Ser-473'. This Homo sapiens (Human) protein is Vascular endothelial growth factor receptor 3 (FLT4).